The following is a 170-amino-acid chain: Fimbrial protein (170 aa).

Positions 1-7 (MNTLQKG) are excised as a propeptide. Phenylalanine 8 carries the post-translational modification N-methylphenylalanine. Residues 8 to 28 (FTLIELMIVIAIVGILAAVAL) traverse the membrane as a helical segment. O-linked (Gal...) serine glycosylation occurs at serine 70. Serine 100 carries the post-translational modification O-(sn-1-glycerophosphoryl)serine. Cysteine 127 and cysteine 163 are disulfide-bonded.

It belongs to the N-Me-Phe pilin family. The pili are polar flexible filaments of about 5.4 nanometers diameter and 2.5 micrometers average length; they consist of only a single polypeptide chain arranged in a helical configuration of five subunits per turn in the assembled pilus. In terms of processing, O-linked glycan consists of GlcNAc-Gal disaccharide.

It localises to the fimbrium. The protein localises to the membrane. Functionally, major component of the type IV pilus (T4P) that plays a role in cellular adherence, microcolony formation as well as twitching motility. This Neisseria meningitidis serogroup A / serotype 4A (strain DSM 15465 / Z2491) protein is Fimbrial protein (pilE).